The following is a 193-amino-acid chain: uncharacterized protein (193 aa).

Positions 86–181 (TKQRELLEIL…QVEEVQAEVG (96 aa)) form a coiled coil.

This is an uncharacterized protein from Streptococcus pyogenes serotype M6 (strain ATCC BAA-946 / MGAS10394).